The primary structure comprises 203 residues: Protein P10 (203 aa).

Disordered stretches follow at residues Met1–Lys80 and Arg166–Leu203. The span at Gly39–Asp49 shows a compositional bias: gly residues. The span at Gln180–Pro189 shows a compositional bias: basic and acidic residues.

Functionally, assembly protein. The major coat protein P3 and two assembly factors (P10 and P17) are needed during the assembly of the virus particle inside the host cell, when the capsid protein multimers are capable of enclosing the host-derived membrane, containing the virus-encoded membrane-associated proteins. In Acinetobacter calcoaceticus (Arthrobacter siderocapsulatus), this protein is Protein P10 (X).